The chain runs to 138 residues: Large ribosomal subunit protein bL19 (138 aa).

This sequence belongs to the bacterial ribosomal protein bL19 family.

Its function is as follows. This protein is located at the 30S-50S ribosomal subunit interface and may play a role in the structure and function of the aminoacyl-tRNA binding site. In Leptospira interrogans serogroup Icterohaemorrhagiae serovar copenhageni (strain Fiocruz L1-130), this protein is Large ribosomal subunit protein bL19.